Reading from the N-terminus, the 1002-residue chain is Golgin subfamily A member 2 (1002 aa).

The segment covering M1–P11 has biased composition (pro residues). Residues M1–T84 form an interaction with p115/USO1 region. Residues M1–D107 form a disordered region. Residues E16–L892 adopt a coiled-coil conformation. Dimethylated arginine occurs at positions 18, 30, and 35. Residues K26–K49 carry the Nuclear localization signal motif. S37 is modified (phosphoserine). Over residues N52 to G63 the composition is skewed to polar residues. A Phosphoserine modification is found at S66. Over residues A95–N105 the composition is skewed to polar residues. A phosphoserine mark is found at S273, S438, and S690. The interval H694–P724 is disordered. Acidic residues predominate over residues D702–A716. 3 positions are modified to phosphoserine: S937, S953, and S981. The tract at residues D992–I1002 is interaction with GORASP1/GRASP65.

Belongs to the GOLGA2 family. As to quaternary structure, homodimer, may assemble into homohexamers. Homotetramer; forms a parallel homotetramer with a flexible rod-like structure that can give rise to I- and Y-shaped conformations. Interacts with GORASP1/GRASP65. The homooligomer forms a complex with GORASP1 with a 1:1 stoichiometry. Interacts with RAB1B that has been activated by GTP-binding. Interacts with p115/USO1; interaction with p115/USO1 inhibits interaction with STX5 and/or RAB1B. Interacts with STX5. Interacts with ZFPL1. Interacts with AKAP450/AKAP9; leading to recruit AKAP450/AKAP9 to the cis-Golgi. Post-translationally, cleaved by caspases at the onset of apoptosis. Methylation by PRMT5 is required for Golgi ribbon formation. While dimethylation at Arg-30 and Arg-35 are confirmed in vivo, it is unclear whether Arg-18 is methylated in vivo. In terms of processing, phosphorylated at Ser-37 by CDK1 at the onset of mitosis, inhibiting the interaction with p115/USO1 and triggering Golgi disassembly. Phosphorylated at Ser-37 in prophase as the Golgi complex starts to break down, and remains phosphorylated during further breakdown and partitioning of the Golgi fragments in metaphase and anaphase. In telophase, GM130 is dephosphorylated by PP2A as the Golgi fragments start to reassemble.

It localises to the golgi apparatus. Its subcellular location is the cis-Golgi network membrane. The protein resides in the endoplasmic reticulum-Golgi intermediate compartment membrane. The protein localises to the cytoplasm. It is found in the cytoskeleton. It localises to the spindle pole. Peripheral membrane component of the cis-Golgi stack that acts as a membrane skeleton that maintains the structure of the Golgi apparatus, and as a vesicle thether that facilitates vesicle fusion to the Golgi membrane. Required for normal protein transport from the endoplasmic reticulum to the Golgi apparatus and the cell membrane. Together with p115/USO1 and STX5, involved in vesicle tethering and fusion at the cis-Golgi membrane to maintain the stacked and inter-connected structure of the Golgi apparatus. Plays a central role in mitotic Golgi disassembly: phosphorylation at Ser-37 by CDK1 at the onset of mitosis inhibits the interaction with p115/USO1, preventing tethering of COPI vesicles and thereby inhibiting transport through the Golgi apparatus during mitosis. Also plays a key role in spindle pole assembly and centrosome organization. Promotes the mitotic spindle pole assembly by activating the spindle assembly factor TPX2 to nucleate microtubules around the Golgi and capture them to couple mitotic membranes to the spindle: upon phosphorylation at the onset of mitosis, GOLGA2 interacts with importin-alpha via the nuclear localization signal region, leading to recruit importin-alpha to the Golgi membranes and liberate the spindle assembly factor TPX2 from importin-alpha. TPX2 then activates AURKA kinase and stimulates local microtubule nucleation. Upon filament assembly, nascent microtubules are further captured by GOLGA2, thus linking Golgi membranes to the spindle. Regulates the meiotic spindle pole assembly, probably via the same mechanism. Also regulates the centrosome organization. Also required for the Golgi ribbon formation and glycosylation of membrane and secretory proteins. The protein is Golgin subfamily A member 2 (GOLGA2) of Homo sapiens (Human).